The primary structure comprises 446 residues: Tubulin alpha chain-like 3 (446 aa).

Positions 1 to 4 (MREC) match the MREC motif motif. GTP contacts are provided by Gln11, Glu78, Ser147, Gly151, Thr152, Thr186, Asn213, and Asn235. A Mg(2+)-binding site is contributed by Glu78. Residue Glu261 is part of the active site.

It belongs to the tubulin family. In terms of assembly, dimer of alpha and beta chains. A typical microtubule is a hollow water-filled tube with an outer diameter of 25 nm and an inner diameter of 15 nM. Alpha-beta heterodimers associate head-to-tail to form protofilaments running lengthwise along the microtubule wall with the beta-tubulin subunit facing the microtubule plus end conferring a structural polarity. Microtubules usually have 13 protofilaments but different protofilament numbers can be found in some organisms and specialized cells. Mg(2+) is required as a cofactor. Some glutamate residues at the C-terminus are polyglutamylated, resulting in polyglutamate chains on the gamma-carboxyl group. Polyglutamylation plays a key role in microtubule severing by spastin (SPAST). SPAST preferentially recognizes and acts on microtubules decorated with short polyglutamate tails: severing activity by SPAST increases as the number of glutamates per tubulin rises from one to eight, but decreases beyond this glutamylation threshold. Glutamylation is also involved in cilia motility. Post-translationally, some glutamate residues at the C-terminus are monoglycylated but not polyglycylated due to the absence of functional TTLL10 in human. Monoglycylation is mainly limited to tubulin incorporated into cilia and flagella axonemes, which is required for their stability and maintenance. Flagella glycylation controls sperm motility. Both polyglutamylation and monoglycylation can coexist on the same protein on adjacent residues, and lowering glycylation levels increases polyglutamylation, and reciprocally.

The protein localises to the cytoplasm. Its subcellular location is the cytoskeleton. The enzyme catalyses GTP + H2O = GDP + phosphate + H(+). Tubulin is the major constituent of microtubules, a cylinder consisting of laterally associated linear protofilaments composed of alpha- and beta-tubulin heterodimers. Microtubules grow by the addition of GTP-tubulin dimers to the microtubule end, where a stabilizing cap forms. Below the cap, tubulin dimers are in GDP-bound state, owing to GTPase activity of alpha-tubulin. This chain is Tubulin alpha chain-like 3 (TUBAL3), found in Homo sapiens (Human).